Here is a 341-residue protein sequence, read N- to C-terminus: GTPase Obg (341 aa).

Residues 2–160 form the Obg domain; the sequence is SGFIDEVPIQ…FSLILELKLL (159 aa). The OBG-type G domain maps to 161–330; sequence ADIGIVGLPN…LLERIDKVFF (170 aa). GTP contacts are provided by residues 167–174, 192–196, 215–218, 282–285, and 311–313; these read GLPNAGKS, FTTLS, DIPG, NKMD, and SAD. Residues Ser-174 and Thr-194 each contribute to the Mg(2+) site.

The protein belongs to the TRAFAC class OBG-HflX-like GTPase superfamily. OBG GTPase family. In terms of assembly, monomer. Requires Mg(2+) as cofactor.

Its subcellular location is the cytoplasm. Functionally, an essential GTPase which binds GTP, GDP and possibly (p)ppGpp with moderate affinity, with high nucleotide exchange rates and a fairly low GTP hydrolysis rate. Plays a role in control of the cell cycle, stress response, ribosome biogenesis and in those bacteria that undergo differentiation, in morphogenesis control. The protein is GTPase Obg of Leptospira biflexa serovar Patoc (strain Patoc 1 / Ames).